Reading from the N-terminus, the 117-residue chain is Immunoglobulin heavy variable 4-38-2 (117 aa).

A signal peptide spans 1–19 (MKHLWFFLLLVAAPRWVLS). The framework-1 stretch occupies residues 20–44 (QVQLQESGPGLVKPSETLSLTCTVS). The region spanning 20–117 (QVQLQESGPG…ADTAVYYCAR (98 aa)) is the Ig-like domain. Cysteines 41 and 115 form a disulfide. Residues 45–53 (GYSISSGYY) are complementarity-determining-1. A framework-2 region spans residues 54–70 (WGWIRQPPGKGLEWIGS). The tract at residues 71 to 77 (IYHSGST) is complementarity-determining-2. The framework-3 stretch occupies residues 78 to 115 (YYNPSLKSRVTISVDTSKNQFSLKLSSVTAADTAVYYC). The complementarity-determining-3 stretch occupies residues 116–117 (AR).

As to quaternary structure, immunoglobulins are composed of two identical heavy chains and two identical light chains; disulfide-linked.

The protein localises to the secreted. The protein resides in the cell membrane. Functionally, v region of the variable domain of immunoglobulin heavy chains that participates in the antigen recognition. Immunoglobulins, also known as antibodies, are membrane-bound or secreted glycoproteins produced by B lymphocytes. In the recognition phase of humoral immunity, the membrane-bound immunoglobulins serve as receptors which, upon binding of a specific antigen, trigger the clonal expansion and differentiation of B lymphocytes into immunoglobulins-secreting plasma cells. Secreted immunoglobulins mediate the effector phase of humoral immunity, which results in the elimination of bound antigens. The antigen binding site is formed by the variable domain of one heavy chain, together with that of its associated light chain. Thus, each immunoglobulin has two antigen binding sites with remarkable affinity for a particular antigen. The variable domains are assembled by a process called V-(D)-J rearrangement and can then be subjected to somatic hypermutations which, after exposure to antigen and selection, allow affinity maturation for a particular antigen. This Homo sapiens (Human) protein is Immunoglobulin heavy variable 4-38-2.